Here is a 556-residue protein sequence, read N- to C-terminus: Beta-hexosaminidase subunit beta (556 aa).

Residues 1–42 (MELCGLGLPRPPMLLALLLATLLAAMLALLTQVALVVQVAEA) form the signal peptide. A propeptide spanning residues 43–121 (ARAPSVSAKP…HHEPAEFQAK (79 aa)) is cleaved from the precursor. N-linked (GlcNAc...) asparagine glycosylation is present at asparagine 84. Cysteine 91 and cysteine 137 are disulfide-bonded. Residues asparagine 142, asparagine 190, and asparagine 327 are each glycosylated (N-linked (GlcNAc...) asparagine). 2 disulfide bridges follow: cysteine 309–cysteine 360 and cysteine 534–cysteine 551. The active-site Proton donor is the glutamate 355.

Belongs to the glycosyl hydrolase 20 family. There are 3 forms of beta-hexosaminidase: hexosaminidase A is a heterodimer composed of one subunit alpha and one subunit beta (chain A and B); hexosaminidase B is a homodimer of two beta subunits (two chains A and B); hexosaminidase S is a homodimer of two alpha subunits. The composition of the dimer (isozyme A versus isozyme S) has a significant effect on the substrate specificity of the alpha subunit active site. Post-translationally, N-linked glycans at Asn-142 and Asn-190 consist of Man(3)-GlcNAc(2) and Man(5 to 7)-GlcNAc(2), respectively. The beta-A and beta-B chains are produced by proteolytic processing of the precursor beta chain.

The protein resides in the lysosome. Its subcellular location is the cytoplasmic vesicle. The protein localises to the secretory vesicle. It localises to the cortical granule. The enzyme catalyses Hydrolysis of terminal non-reducing N-acetyl-D-hexosamine residues in N-acetyl-beta-D-hexosaminides.. It carries out the reaction N-acetyl-beta-D-galactosaminyl-(1-&gt;4)-beta-D-3-sulfogalactosyl-(1-&gt;4)-beta-D-glucosyl-(1&lt;-&gt;1')-ceramide + H2O = a beta-D-3-sulfogalactosyl-(1-&gt;4)-beta-D-glucosyl-(1&lt;-&gt;1')-ceramide + N-acetyl-beta-D-galactosamine. The catalysed reaction is a ganglioside GM2 (d18:1(4E)) + H2O = a ganglioside GM3 (d18:1(4E)) + N-acetyl-beta-D-galactosamine. It catalyses the reaction a ganglioside GM2 + H2O = a ganglioside GM3 + N-acetyl-beta-D-galactosamine. The enzyme catalyses beta-D-GalNAc-(1-&gt;4)-alpha-L-IdoA-(1-&gt;3)-beta-D-GalNAc-4-sulfate-(1-&gt;4)-alpha-L-IdoA-(1-&gt;3)-D-GalNAc-4-sulfate + H2O = alpha-L-IdoA-(1-&gt;3)-beta-D-GalNAc-4-sulfate-(1-&gt;4)-alpha-L-IdoA-(1-&gt;3)-D-GalNAc-4-sulfate + N-acetyl-D-galactosamine. It carries out the reaction N-acetyl-beta-D-6-sulfogalactosaminyl-(1-&gt;4)-alpha-L-iduronyl-(1-&gt;3)-N-acetyl-D-6-sulfogalactosamine + H2O = alpha-L-iduronyl-(1-&gt;3)-N-acetyl-D-6-sulfogalactosamine + N-acetyl-D-6-sulfogalactosamine. Its activity is regulated as follows. Addition of GM2A stimulates the hydrolysis of sulfated glycosphingolipid SM2 and the ganglioside GM2. Functionally, hydrolyzes the non-reducing end N-acetyl-D-hexosamine and/or sulfated N-acetyl-D-hexosamine of glycoconjugates, such as the oligosaccharide moieties from proteins and neutral glycolipids, or from certain mucopolysaccharides. The isozyme B does not hydrolyze each of these substrates, however hydrolyzes efficiently neutral oligosaccharide. Only the isozyme A is responsible for the degradation of GM2 gangliosides in the presence of GM2A. During fertilization is responsible, at least in part, for the zona block to polyspermy. Present in the cortical granules of non-activated oocytes, is exocytosed during the cortical reaction in response to oocyte activation and inactivates the sperm galactosyltransferase-binding site, accounting for the block in sperm binding to the zona pellucida. The chain is Beta-hexosaminidase subunit beta from Homo sapiens (Human).